The chain runs to 462 residues: UDP-N-acetylmuramate--L-alanine ligase (462 aa).

112 to 118 (GTHGKTT) provides a ligand contact to ATP.

The protein belongs to the MurCDEF family.

The protein resides in the cytoplasm. The catalysed reaction is UDP-N-acetyl-alpha-D-muramate + L-alanine + ATP = UDP-N-acetyl-alpha-D-muramoyl-L-alanine + ADP + phosphate + H(+). It functions in the pathway cell wall biogenesis; peptidoglycan biosynthesis. Functionally, cell wall formation. The sequence is that of UDP-N-acetylmuramate--L-alanine ligase from Geobacter sulfurreducens (strain ATCC 51573 / DSM 12127 / PCA).